The chain runs to 284 residues: Bifunctional protein FolD (284 aa).

NADP(+) is bound by residues 165 to 167 (GRG), Thr192, and Val233.

It belongs to the tetrahydrofolate dehydrogenase/cyclohydrolase family. In terms of assembly, homodimer.

It catalyses the reaction (6R)-5,10-methylene-5,6,7,8-tetrahydrofolate + NADP(+) = (6R)-5,10-methenyltetrahydrofolate + NADPH. The catalysed reaction is (6R)-5,10-methenyltetrahydrofolate + H2O = (6R)-10-formyltetrahydrofolate + H(+). It participates in one-carbon metabolism; tetrahydrofolate interconversion. Its function is as follows. Catalyzes the oxidation of 5,10-methylenetetrahydrofolate to 5,10-methenyltetrahydrofolate and then the hydrolysis of 5,10-methenyltetrahydrofolate to 10-formyltetrahydrofolate. This chain is Bifunctional protein FolD, found in Corynebacterium efficiens (strain DSM 44549 / YS-314 / AJ 12310 / JCM 11189 / NBRC 100395).